Reading from the N-terminus, the 92-residue chain is UPF0358 protein Exig_1994 (92 aa).

Belongs to the UPF0358 family.

This Exiguobacterium sibiricum (strain DSM 17290 / CCUG 55495 / CIP 109462 / JCM 13490 / 255-15) protein is UPF0358 protein Exig_1994.